A 436-amino-acid chain; its full sequence is Phaseolin, alpha-type (436 aa).

The first 24 residues, 1–24 (MMRARVPLLLLGILFLASLSASFA), serve as a signal peptide directing secretion. Residues 233 to 257 (LSKHAKSSSRKSHSKQDNTIGNEFG) are disordered. Residues 236-245 (HAKSSSRKSH) are compositionally biased toward basic residues. The region spanning 245–396 (HSKQDNTIGN…TFSGSGEEVM (152 aa)) is the Cupin type-1 domain. The N-linked (GlcNAc...) (complex) asparagine; alternate glycan is linked to Asn258. Asn258 carries N-linked (GlcNAc...) (high mannose) asparagine; alternate glycosylation. An N-linked (GlcNAc...) (high mannose) asparagine glycan is attached at Asn347. The disordered stretch occupies residues 411-436 (HHHQQEQQKGSHQQEQQKGRKGAFVY). Positions 417 to 426 (QQKGSHQQEQ) are enriched in low complexity.

The protein belongs to the 7S seed storage protein family. In terms of assembly, homotrimer. In terms of processing, N-glycosylated; glycans consist in Man9(GlcNAc)2 and Man7(GlcNAc)2 when dually glycosylated at Asn-258 and Asn-347, whereas it consists in Xyl-Man3(GlcNAc)2 when solely glycosylated at Asn-258.

Its subcellular location is the vacuole. It is found in the aleurone grain. Functionally, major seed storage protein. The polypeptide is Phaseolin, alpha-type (Phaseolus vulgaris (Kidney bean)).